We begin with the raw amino-acid sequence, 255 residues long: tRNA (guanine-N(1)-)-methyltransferase (255 aa).

S-adenosyl-L-methionine contacts are provided by residues glycine 113 and 133 to 138 (IGDYVL).

The protein belongs to the RNA methyltransferase TrmD family. As to quaternary structure, homodimer.

The protein resides in the cytoplasm. The catalysed reaction is guanosine(37) in tRNA + S-adenosyl-L-methionine = N(1)-methylguanosine(37) in tRNA + S-adenosyl-L-homocysteine + H(+). Functionally, specifically methylates guanosine-37 in various tRNAs. This is tRNA (guanine-N(1)-)-methyltransferase from Escherichia fergusonii (strain ATCC 35469 / DSM 13698 / CCUG 18766 / IAM 14443 / JCM 21226 / LMG 7866 / NBRC 102419 / NCTC 12128 / CDC 0568-73).